The primary structure comprises 261 residues: Transmembrane protein 106A (261 aa).

Residues Met1 to Ser10 are compositionally biased toward polar residues. The segment at Met1–Asn22 is disordered. A helical transmembrane segment spans residues Leu93–Leu113.

This sequence belongs to the TMEM106 family.

The protein resides in the cell membrane. Functionally, activates macrophages and polarizes them into M1-like macrophages through the activation of the MAPK and NF-kappaB signaling pathway. Upon activation, up-regulates the expression of CD80, CD86, CD69 and MHC II on macrophages, and induces the release of pro-inflammatory cytokines such as TNF, IL1B, IL6, CCL2 and nitric oxide. May play a role in inhibition of proliferation and migration. The sequence is that of Transmembrane protein 106A (Tmem106a) from Rattus norvegicus (Rat).